The chain runs to 188 residues: Guanylate kinase (188 aa).

In terms of domain architecture, Guanylate kinase-like spans 2–183 (TKLIIISAPS…CVEQIRKAIA (182 aa)). 9 to 16 (APSGTGKS) is an ATP binding site.

Belongs to the guanylate kinase family.

It is found in the cytoplasm. It catalyses the reaction GMP + ATP = GDP + ADP. Its function is as follows. Essential for recycling GMP and indirectly, cGMP. This Porphyromonas gingivalis (strain ATCC BAA-308 / W83) protein is Guanylate kinase.